The following is a 279-amino-acid chain: 3-methyl-2-oxobutanoate hydroxymethyltransferase (279 aa).

Positions 43 and 82 each coordinate Mg(2+). Residues aspartate 43–serine 44, aspartate 82, and lysine 112 contribute to the 3-methyl-2-oxobutanoate site. A Mg(2+)-binding site is contributed by glutamate 114. Glutamate 181 (proton acceptor) is an active-site residue.

The protein belongs to the PanB family. As to quaternary structure, homodecamer; pentamer of dimers. The cofactor is Mg(2+).

Its subcellular location is the cytoplasm. The catalysed reaction is 3-methyl-2-oxobutanoate + (6R)-5,10-methylene-5,6,7,8-tetrahydrofolate + H2O = 2-dehydropantoate + (6S)-5,6,7,8-tetrahydrofolate. It participates in cofactor biosynthesis; (R)-pantothenate biosynthesis; (R)-pantoate from 3-methyl-2-oxobutanoate: step 1/2. Functionally, catalyzes the reversible reaction in which hydroxymethyl group from 5,10-methylenetetrahydrofolate is transferred onto alpha-ketoisovalerate to form ketopantoate. The sequence is that of 3-methyl-2-oxobutanoate hydroxymethyltransferase from Lysinibacillus sphaericus (strain C3-41).